The following is a 55-amino-acid chain: Regulatory protein MokB (55 aa).

In terms of biological role, overlapping regulatory peptide whose translation enables hokB expression. The protein is Regulatory protein MokB (mokB) of Escherichia coli (strain K12).